Reading from the N-terminus, the 181-residue chain is Protein GrpE (181 aa).

It belongs to the GrpE family. As to quaternary structure, homodimer.

The protein resides in the cytoplasm. In terms of biological role, participates actively in the response to hyperosmotic and heat shock by preventing the aggregation of stress-denatured proteins, in association with DnaK and GrpE. It is the nucleotide exchange factor for DnaK and may function as a thermosensor. Unfolded proteins bind initially to DnaJ; upon interaction with the DnaJ-bound protein, DnaK hydrolyzes its bound ATP, resulting in the formation of a stable complex. GrpE releases ADP from DnaK; ATP binding to DnaK triggers the release of the substrate protein, thus completing the reaction cycle. Several rounds of ATP-dependent interactions between DnaJ, DnaK and GrpE are required for fully efficient folding. This chain is Protein GrpE, found in Leptothrix cholodnii (strain ATCC 51168 / LMG 8142 / SP-6) (Leptothrix discophora (strain SP-6)).